We begin with the raw amino-acid sequence, 85 residues long: UPF0512 protein U (85 aa).

It belongs to the UPF0512 family.

This Dictyostelium discoideum (Social amoeba) protein is UPF0512 protein U.